We begin with the raw amino-acid sequence, 409 residues long: TAR DNA-binding protein 43 (409 aa).

RRM domains follow at residues 105–200 and 191–262; these read SDLI…RCTE and RKVF…TAEP. Disordered regions lie at residues 260–302 and 341–409; these read AEPK…NQGG and SQQN…GWGM. Positions 261–274 are enriched in basic and acidic residues; it reads EPKHNNNRQLERGG. Over residues 281–292 the composition is skewed to polar residues; that stretch reads FGNQGYPNSRPS. 2 stretches are compositionally biased toward low complexity: residues 341-387 and 395-409; these read SQQN…PNAG and GFSS…GWGM.

As to quaternary structure, homodimer.

The protein localises to the nucleus. It localises to the cytoplasm. The protein resides in the stress granule. It is found in the mitochondrion. Its function is as follows. Probably involved in transcriptional repression. May play a role in the maintenance of the circadian clock periodicity. This Xenopus tropicalis (Western clawed frog) protein is TAR DNA-binding protein 43 (tardbp).